We begin with the raw amino-acid sequence, 199 residues long: NADH-quinone oxidoreductase subunit C (199 aa).

It belongs to the complex I 30 kDa subunit family. As to quaternary structure, NDH-1 is composed of 14 different subunits. Subunits NuoB, C, D, E, F, and G constitute the peripheral sector of the complex.

It is found in the cell inner membrane. The enzyme catalyses a quinone + NADH + 5 H(+)(in) = a quinol + NAD(+) + 4 H(+)(out). NDH-1 shuttles electrons from NADH, via FMN and iron-sulfur (Fe-S) centers, to quinones in the respiratory chain. The immediate electron acceptor for the enzyme in this species is believed to be ubiquinone. Couples the redox reaction to proton translocation (for every two electrons transferred, four hydrogen ions are translocated across the cytoplasmic membrane), and thus conserves the redox energy in a proton gradient. This Cupriavidus pinatubonensis (strain JMP 134 / LMG 1197) (Cupriavidus necator (strain JMP 134)) protein is NADH-quinone oxidoreductase subunit C.